Consider the following 246-residue polypeptide: Sugar fermentation stimulation protein homolog (246 aa).

This sequence belongs to the SfsA family.

The sequence is that of Sugar fermentation stimulation protein homolog from Prochlorococcus marinus (strain MIT 9301).